We begin with the raw amino-acid sequence, 147 residues long: MERTFVILKPNAVRRGLVGEILKRFEQRGIKIVGLKFLKMTREQAEKLYEPHKGKQFYDELLEFMLSGPIVAVILEAPRCLELVRHIVGATDPLKAEAGSIRGEFALTVTKNLIHASDSTDNFIRESSIFFSPSEIIDYYLDVQDDI.

Residues K9, F57, R85, T91, R102, and N112 each coordinate ATP. The Pros-phosphohistidine intermediate role is filled by H115.

Belongs to the NDK family. In terms of assembly, homotetramer. Mg(2+) serves as cofactor.

The protein resides in the cytoplasm. The catalysed reaction is a 2'-deoxyribonucleoside 5'-diphosphate + ATP = a 2'-deoxyribonucleoside 5'-triphosphate + ADP. The enzyme catalyses a ribonucleoside 5'-diphosphate + ATP = a ribonucleoside 5'-triphosphate + ADP. Major role in the synthesis of nucleoside triphosphates other than ATP. The ATP gamma phosphate is transferred to the NDP beta phosphate via a ping-pong mechanism, using a phosphorylated active-site intermediate. The sequence is that of Nucleoside diphosphate kinase from Fervidobacterium nodosum (strain ATCC 35602 / DSM 5306 / Rt17-B1).